A 910-amino-acid polypeptide reads, in one-letter code: DNA mismatch repair protein MutS (910 aa).

ATP is bound at residue 615 to 622 (GPNMAGKS).

The protein belongs to the DNA mismatch repair MutS family.

Its function is as follows. This protein is involved in the repair of mismatches in DNA. It is possible that it carries out the mismatch recognition step. This protein has a weak ATPase activity. The sequence is that of DNA mismatch repair protein MutS from Clostridium perfringens (strain ATCC 13124 / DSM 756 / JCM 1290 / NCIMB 6125 / NCTC 8237 / Type A).